The following is a 214-amino-acid chain: Osteoclast-stimulating factor 1 (214 aa).

An SH3 domain is found at 12–71; the sequence is GQVKVFRALYTFEPRTPDELYFEEGDILYIADMSDTNWWKGTCKGKTGLIPSNYVAEQAE. ANK repeat units lie at residues 72–101, 105–135, and 139–168; these read SIDNPLHEAAKRGNLSWLRECLENRVGVNG, AGSTALYWGCHGGHKDVVDMLLAQPNIELNQ, and LGDTALHAAAWKGYADIVELLLVKGARTDL.

The protein localises to the cytoplasm. Functionally, induces bone resorption, acting probably through a signaling cascade which results in the secretion of factor(s) enhancing osteoclast formation and activity. This is Osteoclast-stimulating factor 1 (ostf1) from Xenopus laevis (African clawed frog).